Reading from the N-terminus, the 101-residue chain is Small ribosomal subunit protein uS14 (101 aa).

Belongs to the universal ribosomal protein uS14 family. As to quaternary structure, part of the 30S ribosomal subunit. Contacts proteins S3 and S10.

Its function is as follows. Binds 16S rRNA, required for the assembly of 30S particles and may also be responsible for determining the conformation of the 16S rRNA at the A site. The protein is Small ribosomal subunit protein uS14 of Francisella tularensis subsp. tularensis (strain FSC 198).